Consider the following 47-residue polypeptide: Delta-ctenitoxin-Asp2e (47 aa).

Intrachain disulfides connect C3–C17, C10–C23, C14–C46, C16–C31, and C25–C29.

In terms of tissue distribution, expressed by the venom gland.

The protein resides in the secreted. Functionally, inhibits the inactivation of voltage-gated sodium channels (Nav). This is Delta-ctenitoxin-Asp2e from Ancylometes sp. (South American fishing spider).